A 413-amino-acid polypeptide reads, in one-letter code: Methylaspartate ammonia-lyase (413 aa).

(2S,3S)-3-methyl-L-aspartate is bound at residue glutamine 172. Residues aspartate 238, glutamate 273, and aspartate 307 each coordinate Mg(2+). Residue glutamine 329 coordinates (2S,3S)-3-methyl-L-aspartate. Lysine 331 acts as the Proton acceptor in catalysis. Position 360-361 (360-361) interacts with (2S,3S)-3-methyl-L-aspartate; the sequence is TC.

This sequence belongs to the methylaspartate ammonia-lyase family. In terms of assembly, homodimer. Requires Mg(2+) as cofactor.

It carries out the reaction (2S,3S)-3-methyl-L-aspartate = mesaconate + NH4(+). It functions in the pathway amino-acid degradation; L-glutamate degradation via mesaconate pathway; acetate and pyruvate from L-glutamate: step 2/4. Its function is as follows. Involved in the methylaspartate cycle. Catalyzes the formation of the alpha,beta-unsaturated bond by the reversible anti elimination of ammonia from L-threo-beta-methylaspartate (L-threo-(2S,3S)-3-methylaspartate) to give mesaconate. This Citrobacter amalonaticus protein is Methylaspartate ammonia-lyase.